We begin with the raw amino-acid sequence, 87 residues long: uncharacterized protein (87 aa).

A helical membrane pass occupies residues 44–64 (DALYLAGSTIFTIVTTLVAWF).

Belongs to the SPP1 holin family.

The protein resides in the membrane. This is an uncharacterized protein from Bacillus licheniformis.